Consider the following 1125-residue polypeptide: Transient receptor potential cation channel subfamily A member 1 (1125 aa).

Residues 1–721 are Cytoplasmic-facing; sequence MKRGLRRILL…KWCAYGFRAH (721 aa). 9 ANK repeats span residues 63 to 94, 98 to 127, 131 to 161, 165 to 194, 198 to 227, 239 to 268, 272 to 301, 309 to 338, and 342 to 371; these read ENLC…VLNI, YGNT…NPNL, NMMS…NINL, NGNT…KLCK, WGDY…KNGY, KKAS…HIDM, AKCM…GSSD, NQET…DINS, and EGRS…KVDI. 5 disulfide bridges follow: Cys-193–Cys-666, Cys-463–Cys-666, Cys-609–Cys-622, Cys-622–Cys-666, and Cys-634–Cys-859. Residue Pro-395 is modified to 4-hydroxyproline; transient. ANK repeat units follow at residues 413 to 442, 446 to 475, 482 to 511, 514 to 543, and 548 to 577; these read DGCT…SIHS, DKKS…DTRL, HGMT…LFLS, NGWT…KCTD, and EGNT…DILL. Cys-415 and Cys-422 together coordinate (E)-cinnamaldehyde. Cys-622 is a binding site for (E)-cinnamaldehyde. Cys-634 is subject to Cysteine sulfenic acid (-SOH); transient; in hyperoxia. (E)-cinnamaldehyde is bound by residues Cys-642, Cys-666, and Lys-712. A helical membrane pass occupies residues 722–742; it reads MMNLGSYCLGLIPMTLLVVKI. Topologically, residues 743–767 are extracellular; the sequence is QPGMAFNSTGIINGTSSTHEERIDT. Residues Asn-749 and Asn-755 are each glycosylated (N-linked (GlcNAc...) asparagine). A helical membrane pass occupies residues 768 to 788; that stretch reads LNSFPIKICMILVFLSSIFGY. At 789–806 the chain is on the cytoplasmic side; it reads CKEVIQIFQQKRNYFLDY. Glu-791, Gln-794, Asn-808, and Glu-811 together coordinate Ca(2+). The chain crosses the membrane as a helical span at residues 807-827; it reads NNALEWVIYTTSIIFVLPLFL. Over 828-832 the chain is Extracellular; that stretch reads NIPAY. Residues 833–853 traverse the membrane as a helical segment; sequence MQWQCGAIAIFFYWMNFLLYL. Over 854 to 876 the chain is Cytoplasmic; sequence QRFENCGIFIVMLEVIFKTLLRS. Cys-859 carries the cysteine sulfenic acid (-SOH); transient; in hyperoxia modification. Residues 877–897 traverse the membrane as a helical segment; sequence TGVFIFLLLAFGLSFYVLLNF. The Extracellular segment spans residues 898–904; that stretch reads QDAFSTP. Positions 905–925 form an intramembrane region, pore-forming; it reads LLSLIQTFSMMLGDINYRDAF. The Extracellular portion of the chain corresponds to 926–937; it reads LEPLFRNELAYP. Residues 938–959 traverse the membrane as a helical segment; sequence VLTFGQLIAFTMFVPIVLMNLL. Residues 960–1125 are Cytoplasmic-facing; it reads IGLAVGDIAE…THCSISHPDF (166 aa). Residues 1044–1073 adopt a coiled-coil conformation; the sequence is MEILKQKYRLKDLTSLLEKQHELIKLIIQK. 1048–1054 is an a 1,2-diacyl-sn-glycero-3-phospho-(1D-myo-inositol) binding site; the sequence is KQKYRLK.

This sequence belongs to the transient receptor (TC 1.A.4) family. Homotetramer. Interacts with TMEM100. Interacts with EGLN1. Interacts with the scorpion wasabi receptor toxin at the same site that electrophiles but in a non-covalent manner. TRPA1 activation by electrophiles occurs though covalent modification of specific cysteine residues in the N-terminal cytoplasmic domain. Post-translationally, hydroxylation is required for TRPA1 activity inhibition in normoxia. In hypoxia, the decrease in oxygen concentration diminishes the activity of the hydroxylase EGLN1, thus relieving TRPA1 from inhibition and ultimately leading to channel activation. In terms of processing, oxidation of Cys-634 and Cys-859 in hyperoxia may override the hydroxylase EGLN1-mediated inhibition, causing TRPA1 activation. As to expression, expressed in inner ear (at protein level). Specifically expressed in a subset of nociceptive neurons. Expressed in the same neurons that TRPV1. In contrast, it is not expressed in neurons expressing TRPM8. Expressed in the superior cervical ganglion of vagus nerve. Expressed in the inferior ganglion (nodose ganglion) of vagus nerve. Expressed in dorsal root ganglia neurons.

Its subcellular location is the cell membrane. The catalysed reaction is Ca(2+)(in) = Ca(2+)(out). The enzyme catalyses Mg(2+)(in) = Mg(2+)(out). It catalyses the reaction Na(+)(in) = Na(+)(out). It carries out the reaction K(+)(in) = K(+)(out). The catalysed reaction is Zn(2+)(in) = Zn(2+)(out). Its activity is regulated as follows. Electrophilic ligands activate the channel by covalent modification of intracellular cysteines. Cys-622 plays a key role in covalent binding of electrophiles. Extracellular Ca(2+) both potentiates and inactivates TRPA1; a rapid potentiation follows by slow desensitization. Activated by increase in intracellular Ca(2+) concentration. Inhibited by the potent blocker of TRPV channels ruthenium red, A-967079. Activated by icilin, sulfhydryl reactive agent MTSEA, N-methyl maleimide (NMM), and PF-4840154. Also activated by hyperoxia. Activated by intracellular Zn(2+). TRPA1 activation may critically depend on the presence of small intracellular compounds such as polyphosphates. Ligand-activated Ca(2+)-permeable, nonselective cation channel. Involved in pain detection and possibly also in cold perception, oxygen concentration perception, cough, itch, and inner ear function. Has a relatively high Ca(2+) selectivity, with a preference for divalent over monovalent cations (Ca(2+) &gt; Ba(2+) &gt; Mg(2+) &gt; NH4(+) &gt; Li(+) &gt; K(+)), the influx of cation into the cytoplasm, leads to membrane depolarization. Has a central role in the pain response to endogenous inflammatory mediators, such as bradykinin and to a diverse array of irritants. Activated by a large variety of structurally unrelated electrophilic and non-electrophilic chemical compounds, such as allylthiocyanate (AITC) from mustard oil or wasabi, cinnamaldehyde, diallyl disulfide (DADS) from garlic, and acrolein, an environmental irritant. Electrophilic ligands activate TRPA1 by interacting with critical N-terminal Cys residues in a covalent manner. Non-electrophile agonists bind at distinct sites in the transmembrane domain to promote channel activation. Also acts as an ionotropic cannabinoid receptor by being activated by delta(9)-tetrahydrocannabinol (THC), the psychoactive component of marijuana. May be a component for the mechanosensitive transduction channel of hair cells in inner ear, thereby participating in the perception of sounds. The sequence is that of Transient receptor potential cation channel subfamily A member 1 from Mus musculus (Mouse).